We begin with the raw amino-acid sequence, 235 residues long: Cell division protein FtsQ (235 aa).

The Cytoplasmic portion of the chain corresponds to 1–6; it reads MERLTR. Residues 7-25 form a helical membrane-spanning segment; it reads WLLVMMAMLLAASGLVWFY. Topologically, residues 26-235 are periplasmic; sequence NSNHLPVKQV…DGLPEKESEE (210 aa). In terms of domain architecture, POTRA spans 30–99; sequence LPVKQVSLKG…DTVEVVLTER (70 aa).

The protein belongs to the FtsQ/DivIB family. FtsQ subfamily. In terms of assembly, part of a complex composed of FtsB, FtsL and FtsQ.

Its subcellular location is the cell inner membrane. Its function is as follows. Essential cell division protein. May link together the upstream cell division proteins, which are predominantly cytoplasmic, with the downstream cell division proteins, which are predominantly periplasmic. May control correct divisome assembly. In Neisseria meningitidis serogroup B (strain ATCC BAA-335 / MC58), this protein is Cell division protein FtsQ.